Consider the following 179-residue polypeptide: Large ribosomal subunit protein uL5 (179 aa).

It belongs to the universal ribosomal protein uL5 family. Part of the 50S ribosomal subunit; part of the 5S rRNA/L5/L18/L25 subcomplex. Contacts the 5S rRNA and the P site tRNA. Forms a bridge to the 30S subunit in the 70S ribosome.

This is one of the proteins that bind and probably mediate the attachment of the 5S RNA into the large ribosomal subunit, where it forms part of the central protuberance. In the 70S ribosome it contacts protein S13 of the 30S subunit (bridge B1b), connecting the 2 subunits; this bridge is implicated in subunit movement. Contacts the P site tRNA; the 5S rRNA and some of its associated proteins might help stabilize positioning of ribosome-bound tRNAs. In Shewanella frigidimarina (strain NCIMB 400), this protein is Large ribosomal subunit protein uL5.